A 135-amino-acid chain; its full sequence is Small ribosomal subunit protein uS12 (135 aa).

Residues 1 to 24 (MPTINQLVRKGRHSKTTKSKSPAL) are disordered. Over residues 9–18 (RKGRHSKTTK) the composition is skewed to basic residues. D102 is modified (3-methylthioaspartic acid).

The protein belongs to the universal ribosomal protein uS12 family. In terms of assembly, part of the 30S ribosomal subunit. Contacts proteins S8 and S17. May interact with IF1 in the 30S initiation complex.

In terms of biological role, with S4 and S5 plays an important role in translational accuracy. Functionally, interacts with and stabilizes bases of the 16S rRNA that are involved in tRNA selection in the A site and with the mRNA backbone. Located at the interface of the 30S and 50S subunits, it traverses the body of the 30S subunit contacting proteins on the other side and probably holding the rRNA structure together. The combined cluster of proteins S8, S12 and S17 appears to hold together the shoulder and platform of the 30S subunit. The sequence is that of Small ribosomal subunit protein uS12 from Lactobacillus delbrueckii subsp. bulgaricus (strain ATCC 11842 / DSM 20081 / BCRC 10696 / JCM 1002 / NBRC 13953 / NCIMB 11778 / NCTC 12712 / WDCM 00102 / Lb 14).